The sequence spans 600 residues: Molybdenum cofactor biosynthesis protein moc-5 (600 aa).

Positions Arg4–Ala371 are molybdenum cofactor biosynthesis protein A. One can recognise a Radical SAM core domain in the interval Met68–Arg284. Residue Arg77 coordinates GTP. [4Fe-4S] cluster-binding residues include Cys84 and Cys88. An S-adenosyl-L-methionine-binding site is contributed by Tyr90. Cys91 is a [4Fe-4S] cluster binding site. Residue Arg127 participates in GTP binding. S-adenosyl-L-methionine is bound at residue Gly131. Thr158 contacts GTP. Ser182 contacts S-adenosyl-L-methionine. Lys218 contributes to the GTP binding site. Met252 serves as a coordination point for S-adenosyl-L-methionine. [4Fe-4S] cluster-binding residues include Cys316 and Cys319. Arg321–Arg323 lines the GTP pocket. Residue Cys333 coordinates [4Fe-4S] cluster. Residues Arg369 to Arg390 form a disordered region. Positions Thr396 to Asp595 are molybdenum cofactor biosynthesis protein C. Asp566 functions as the For molybdenum cofactor biosynthesis protein C activity in the catalytic mechanism.

It in the C-terminal section; belongs to the MoaC family. In the N-terminal section; belongs to the radical SAM superfamily. MoaA family. As to quaternary structure, isoform a and isoform b probably form a heterooligomer. The cofactor is [4Fe-4S] cluster.

The enzyme catalyses GTP + AH2 + S-adenosyl-L-methionine = (8S)-3',8-cyclo-7,8-dihydroguanosine 5'-triphosphate + 5'-deoxyadenosine + L-methionine + A + H(+). The catalysed reaction is (8S)-3',8-cyclo-7,8-dihydroguanosine 5'-triphosphate = cyclic pyranopterin phosphate + diphosphate. Its pathway is cofactor biosynthesis; molybdopterin biosynthesis. Probably forms a complex with isoform b that catalyzes the conversion of 5'-GTP to cyclic pyranopterin monophosphate (cPMP). Catalyzes the cyclization of GTP to (8S)-3',8-cyclo-7,8-dihydroguanosine 5'-triphosphate and mocs1b catalyzes the subsequent conversion of (8S)-3',8-cyclo-7,8-dihydroguanosine 5'-triphosphate to cPMP. Functionally, probably forms a complex with isoform a that catalyzes the conversion of 5'-GTP to cyclic pyranopterin monophosphate (cPMP). This is Molybdenum cofactor biosynthesis protein moc-5 from Caenorhabditis elegans.